The following is a 295-amino-acid chain: Pyridoxal 5'-phosphate synthase subunit PdxS (295 aa).

Position 25 (Asp25) interacts with D-ribose 5-phosphate. Lys82 functions as the Schiff-base intermediate with D-ribose 5-phosphate in the catalytic mechanism. Position 154 (Gly154) interacts with D-ribose 5-phosphate. Arg166 contacts D-glyceraldehyde 3-phosphate. Residues Gly215 and 236–237 (GS) contribute to the D-ribose 5-phosphate site.

This sequence belongs to the PdxS/SNZ family. As to quaternary structure, in the presence of PdxT, forms a dodecamer of heterodimers.

It carries out the reaction aldehydo-D-ribose 5-phosphate + D-glyceraldehyde 3-phosphate + L-glutamine = pyridoxal 5'-phosphate + L-glutamate + phosphate + 3 H2O + H(+). It participates in cofactor biosynthesis; pyridoxal 5'-phosphate biosynthesis. Catalyzes the formation of pyridoxal 5'-phosphate from ribose 5-phosphate (RBP), glyceraldehyde 3-phosphate (G3P) and ammonia. The ammonia is provided by the PdxT subunit. Can also use ribulose 5-phosphate and dihydroxyacetone phosphate as substrates, resulting from enzyme-catalyzed isomerization of RBP and G3P, respectively. The protein is Pyridoxal 5'-phosphate synthase subunit PdxS of Pasteurella multocida (strain Pm70).